A 136-amino-acid chain; its full sequence is Small ribosomal subunit protein uS8c (136 aa).

Belongs to the universal ribosomal protein uS8 family. In terms of assembly, part of the 30S ribosomal subunit.

It localises to the plastid. The protein localises to the chloroplast. In terms of biological role, one of the primary rRNA binding proteins, it binds directly to 16S rRNA central domain where it helps coordinate assembly of the platform of the 30S subunit. In Saccharum officinarum (Sugarcane), this protein is Small ribosomal subunit protein uS8c (rps8).